A 152-amino-acid polypeptide reads, in one-letter code: Deoxyuridine 5'-triphosphate nucleotidohydrolase (152 aa).

Substrate-binding positions include R71–G73, N84, L88–D90, and M98.

The protein belongs to the dUTPase family. Mg(2+) serves as cofactor.

The catalysed reaction is dUTP + H2O = dUMP + diphosphate + H(+). Its pathway is pyrimidine metabolism; dUMP biosynthesis; dUMP from dCTP (dUTP route): step 2/2. Its function is as follows. This enzyme is involved in nucleotide metabolism: it produces dUMP, the immediate precursor of thymidine nucleotides and it decreases the intracellular concentration of dUTP so that uracil cannot be incorporated into DNA. This Citrobacter koseri (strain ATCC BAA-895 / CDC 4225-83 / SGSC4696) protein is Deoxyuridine 5'-triphosphate nucleotidohydrolase.